The following is a 1066-amino-acid chain: MALDGERGEQEEEKKKKKKKKKRKKKEEEGAEKSSSPFAATMGEDDAALRASGRGLSDPWADSVGVRPRTTERHIAVHKRLVLAFAVSIVALLAVTMLAVLLSLRFDECGASAAMPGTDGGLGGFPERGGNSSYPGSARRNHHAGEESSQREIGEVGTAGTPSAHPPSEEEQEQWQPWTQLRLSGHLKPLHYNLMLTAFMENFTFSGEVNVEIACQNATRYVVLHASRVAVEKVQVAEDRAFGAVPVAGFFLYPQTQVLVVVLNRTLDAQRHYNLKIIYNALIENELLGFFRSSYVIHGERRFLGVTQFSPTHARKAFPCFDEPIYKATFKISIKHQATYLSLSNMPVETSVFEEDGWVTDHFSQTPLMSTYYLAWAICNFTYRETTTKSGVVVRLYARPDAIRRGSGDYALHITKRLIEFYEDYFKVPYSLPKLDLLAVPKHPYAAMENWGLSIFVEQRILLDPSVSSISYLLDVTMVIVHEICHQWFGDLVTPVWWEDVWLKEGFAHYFEFVGTDYLYPSWNMEKQRFLTDVLHEVMLLDGLASSHPVSQEVLRATDIDKVFDWIAYKKGAALIRMLANFMGHSVFQRGLQDYLTIHKYGNAARNDLWNTLSEALKRNGKYVNIQEVMDQWTLQMGYPVITILGNMTAENRILITQQHFIYDIGAKTKALQLQNSSYLWQIPLTIVVGNRSHVSSEAIIWVSNKSEHHRITYLDKGSWILGNINQTGYFRVNYDLRNWRLLIDQLIRNHEVLSVSNRAGLIDDAFSLARAGYLPQNIPLEIIRYLSEEKDFLPWHAASRALYPLDKLLDRMENYNIFNEYILKQVATTYSKLGWPKNNFNGSVVQASYQHEELRREVIMLACSFGNKHCHQQASTLISDWISSNRNRIPLNVRDIVYCTGVSLLDEDVWEFIWMKFHSTTAVSEKKILLEALTCSDDRNLLSRLLNLSLNSEVVLDQDAIDVIIHVARNPHGRDLAWKFFRDKWKILNTRYGEALFMNSKLISGVTEFLNTEGELKELKNFMKSYDGVASASFSRAVETVEANVRWKRLYQDELFQWLGKAMRH.

Over residues 1–14 (MALDGERGEQEEEK) the composition is skewed to basic and acidic residues. The interval 1–43 (MALDGERGEQEEEKKKKKKKKKRKKKEEEGAEKSSSPFAATMG) is disordered. Residues 1 to 81 (MALDGERGEQ…ERHIAVHKRL (81 aa)) are Cytoplasmic-facing. The segment covering 15–25 (KKKKKKKKRKK) has biased composition (basic residues). Threonine 71 carries the post-translational modification Phosphothreonine; by PKC. Residues 82-102 (VLAFAVSIVALLAVTMLAVLL) form a helical; Signal-anchor for type II membrane protein membrane-spanning segment. The Extracellular segment spans residues 103–1066 (SLRFDECGAS…FQWLGKAMRH (964 aa)). Positions 117–177 (GTDGGLGGFP…SEEEQEQWQP (61 aa)) are disordered. The segment covering 118 to 127 (TDGGLGGFPE) has biased composition (gly residues). N-linked (GlcNAc...) asparagine glycosylation is present at asparagine 131. The segment covering 143–154 (HAGEESSQREIG) has biased composition (basic and acidic residues). N-linked (GlcNAc...) asparagine glycans are attached at residues asparagine 202, asparagine 217, asparagine 264, and asparagine 380. Residue 446–450 (AAMEN) participates in substrate binding. Histidine 482 provides a ligand contact to Zn(2+). The active-site Proton acceptor is glutamate 483. Residues histidine 486 and glutamate 505 each coordinate Zn(2+). Residues asparagine 647, asparagine 676, asparagine 691, asparagine 705, asparagine 726, asparagine 842, and asparagine 948 are each glycosylated (N-linked (GlcNAc...) asparagine).

The protein belongs to the peptidase M1 family. In terms of assembly, homodimer; disulfide-linked. Requires Zn(2+) as cofactor. As to expression, predominantly expressed in brain and pituitary. Lower levels in lung and liver.

It localises to the membrane. It carries out the reaction Release of the N-terminal pyroglutamyl group from pGlu-|-His-Xaa tripeptides and pGlu-|-His-Xaa-Gly tetrapeptides.. Functionally, specific inactivation of TRH after its release. This is Thyrotropin-releasing hormone-degrading ectoenzyme (Trhde) from Rattus norvegicus (Rat).